A 576-amino-acid polypeptide reads, in one-letter code: Arginine--tRNA ligase (576 aa).

The 'HIGH' region motif lies at P122–H132.

Belongs to the class-I aminoacyl-tRNA synthetase family. Monomer.

It is found in the cytoplasm. It catalyses the reaction tRNA(Arg) + L-arginine + ATP = L-arginyl-tRNA(Arg) + AMP + diphosphate. The polypeptide is Arginine--tRNA ligase (Yersinia pseudotuberculosis serotype I (strain IP32953)).